A 343-amino-acid chain; its full sequence is Phospholipid phosphatase-related protein type 2 (343 aa).

3 helical membrane-spanning segments follow: residues 12–32 (FSIIPCFVFVESVLLGIVILL), 69–89 (VPPALVYALVTAGPTLTILLG), and 129–149 (FLGVYSFGLFTTTIFANAGQV). The N-linked (GlcNAc...) asparagine glycan is linked to Asn-165. Transmembrane regions (helical) follow at residues 210-230 (AALCAYAVTYTAMYVTLVFRV), 239-259 (SLCLALLCPAFLVGVVRVAEY), and 266-286 (VLAGFLTGAAIATFLVTCVVH). Residues 290 to 343 (SRPPSGRRLSPWEDLGQAPTMDSPLEKNPRSAGRIRHRHGSPHPSRRTAPAVAT) form a disordered region. Phosphoserine occurs at positions 299 and 312. Over residues 322–335 (GRIRHRHGSPHPSR) the composition is skewed to basic residues.

Belongs to the PA-phosphatase related phosphoesterase family.

It is found in the membrane. The sequence is that of Phospholipid phosphatase-related protein type 2 from Homo sapiens (Human).